We begin with the raw amino-acid sequence, 351 residues long: Cytochrome c biogenesis protein CcsA (351 aa).

8 helical membrane passes run 17–37, 38–58, 68–88, 97–117, 143–163, 259–279, 286–306, and 320–340; these read VLFLTMLLYWIGAAFPGLPAI, NALGTAGMAIANLSIATLLGA, LSNLYESLFFLSWGITTVHLI, LVGVFTTPVAMGIVAFATLTL, MMLSYSALMVGSLLAIAFLVI, IIGLGFPLLTIGIIAGAVWAN, WSWDPKETWALITWLVFAAYL, and AILAASGFVVVWICYLGVNLL.

This sequence belongs to the CcmF/CycK/Ccl1/NrfE/CcsA family. May interact with ccs1.

Its subcellular location is the cellular thylakoid membrane. Functionally, required during biogenesis of c-type cytochromes (cytochrome c6 and cytochrome f) at the step of heme attachment. This is Cytochrome c biogenesis protein CcsA from Nostoc sp. (strain PCC 7120 / SAG 25.82 / UTEX 2576).